The following is a 122-amino-acid chain: Large ribosomal subunit protein uL18 (122 aa).

Residues 1 to 26 (MSNLSRKQQTQKRHRRLRRHLKGTAQ) are disordered. Residues 9-22 (QTQKRHRRLRRHLK) are compositionally biased toward basic residues.

This sequence belongs to the universal ribosomal protein uL18 family. Part of the 50S ribosomal subunit; part of the 5S rRNA/L5/L18/L25 subcomplex. Contacts the 5S and 23S rRNAs.

In terms of biological role, this is one of the proteins that bind and probably mediate the attachment of the 5S RNA into the large ribosomal subunit, where it forms part of the central protuberance. This is Large ribosomal subunit protein uL18 from Prochlorococcus marinus (strain MIT 9313).